The primary structure comprises 103 residues: Large ribosomal subunit protein bL21 (103 aa).

The protein belongs to the bacterial ribosomal protein bL21 family. As to quaternary structure, part of the 50S ribosomal subunit. Contacts protein L20.

This protein binds to 23S rRNA in the presence of protein L20. This chain is Large ribosomal subunit protein bL21, found in Yersinia enterocolitica serotype O:8 / biotype 1B (strain NCTC 13174 / 8081).